Consider the following 642-residue polypeptide: tRNA uridine 5-carboxymethylaminomethyl modification enzyme MnmG (642 aa).

FAD contacts are provided by residues 10 to 15, Val-122, and Ser-177; that span reads GAGHAG. 269-283 contributes to the NAD(+) binding site; it reads SARYCPSLEDKVMRF. Position 366 (Gln-366) interacts with FAD.

Belongs to the MnmG family. In terms of assembly, homodimer. Heterotetramer of two MnmE and two MnmG subunits. FAD is required as a cofactor.

It is found in the cytoplasm. In terms of biological role, NAD-binding protein involved in the addition of a carboxymethylaminomethyl (cmnm) group at the wobble position (U34) of certain tRNAs, forming tRNA-cmnm(5)s(2)U34. The sequence is that of tRNA uridine 5-carboxymethylaminomethyl modification enzyme MnmG from Syntrophobacter fumaroxidans (strain DSM 10017 / MPOB).